We begin with the raw amino-acid sequence, 337 residues long: Neurogenic differentiation factor 6 (337 aa).

A disordered region spans residues 43-82 (LRGKSIKRAPGEETEKEEEEEDREEEDENGLPRRRGLRKK). Over residues 54–71 (EETEKEEEEEDREEEDEN) the composition is skewed to acidic residues. A Nuclear localization signal motif is present at residues 80-86 (RKKKTTK). The 53-residue stretch at 94 to 146 (FRRQEANARERNRMHGLNDALDNLRKVVPCYSKTQKLSKIETLRLAKNYIWAL) folds into the bHLH domain.

In terms of assembly, efficient DNA binding requires dimerization with another bHLH protein.

Its subcellular location is the nucleus. Activates E box-dependent transcription in collaboration with TCF3/E47. May be a trans-acting factor involved in the development and maintenance of the mammalian nervous system. Transactivates the promoter of its own gene. The protein is Neurogenic differentiation factor 6 (NEUROD6) of Homo sapiens (Human).